We begin with the raw amino-acid sequence, 412 residues long: Citrate synthase (412 aa).

Active-site residues include His-305 and Asp-364.

This sequence belongs to the citrate synthase family.

It carries out the reaction oxaloacetate + acetyl-CoA + H2O = citrate + CoA + H(+). It participates in carbohydrate metabolism; tricarboxylic acid cycle; isocitrate from oxaloacetate: step 1/2. The polypeptide is Citrate synthase (gltA) (Rickettsia bellii).